The primary structure comprises 408 residues: Probable E3 ubiquitin-protein ligase makorin-1 (408 aa).

C3H1-type zinc fingers lie at residues 34–61 and 63–90; these read WTRHVTCRYFIHGVCKEGINCRYSHDLA and SRSAMICRYFQRGCCAYGDRCRYEHNKP. Disordered stretches follow at residues 90 to 114 and 154 to 173; these read PLQEDPTGDTCTAPSESLPEPSGNI and EAYTQGTVKPDEGREEPADP. Over residues 162 to 173 the composition is skewed to basic and acidic residues; sequence KPDEGREEPADP. The C3H1-type 3 zinc-finger motif lies at 174 to 201; the sequence is ELKKQLCPYAAMGECRYGENCVYLHGDP. The segment at 202–229 is makorin-type Cys-His; it reads CDMCGLQVLHPVDTCQRSQHIKSCIEAH. The segment at 247–301 adopts an RING-type zinc-finger fold; that stretch reads CGICMEVVYEKTNPSERRFGILSNCSHSYCLKCIRKWRSAKQFESKIIKSCPECR. Residues 330-359 form a C3H1-type 4 zinc finger; it reads AMSSKSCRYFDEGRGTCPFGGNCFYRHAYP. The segment at 363–408 is disordered; the sequence is IEEPQPRQKSGMSSRYRIPSPSAGIDFGSLTSERAETRLRTRKTKL.

The enzyme catalyses S-ubiquitinyl-[E2 ubiquitin-conjugating enzyme]-L-cysteine + [acceptor protein]-L-lysine = [E2 ubiquitin-conjugating enzyme]-L-cysteine + N(6)-ubiquitinyl-[acceptor protein]-L-lysine.. It participates in protein modification; protein ubiquitination. Its function is as follows. E3 ubiquitin ligase catalyzing the covalent attachment of ubiquitin moieties onto substrate proteins. In Xenopus laevis (African clawed frog), this protein is Probable E3 ubiquitin-protein ligase makorin-1 (mkrn1).